Here is a 71-residue protein sequence, read N- to C-terminus: Hainantoxin-X-2 (71 aa).

The N-terminal stretch at 1–26 is a signal peptide; sequence MKTAIFTVVLALAVFAVLCLVVSTHA. Positions 27-43 are excised as a propeptide; it reads ERHSKTDMEDSPMIQER. Cystine bridges form between Cys-52/Cys-65 and Cys-61/Cys-70.

The protein belongs to the neurotoxin 36 family. 02 subfamily. Expressed by the venom gland.

It localises to the secreted. In terms of biological role, reversibly blocks N-type calcium channels (Cav2.2/CACNA1B) in rat dorsal root ganglion cells. Elicits no toxic symptoms in either vertebrates or invertebrates during a period of 48 hours post-injection, when it was assayed in vivo by direct injection into mice and cockroaches. The polypeptide is Hainantoxin-X-2 (Cyriopagopus hainanus (Chinese bird spider)).